The chain runs to 292 residues: Elongation factor Ts (292 aa).

An involved in Mg(2+) ion dislocation from EF-Tu region spans residues 79–82; it reads TDFV.

It belongs to the EF-Ts family.

The protein resides in the cytoplasm. Its function is as follows. Associates with the EF-Tu.GDP complex and induces the exchange of GDP to GTP. It remains bound to the aminoacyl-tRNA.EF-Tu.GTP complex up to the GTP hydrolysis stage on the ribosome. The sequence is that of Elongation factor Ts from Staphylococcus epidermidis (strain ATCC 12228 / FDA PCI 1200).